The primary structure comprises 170 residues: RNA pyrophosphohydrolase (170 aa).

In terms of domain architecture, Nudix hydrolase spans Pro8–Lys158. Positions Gly46–Ser67 match the Nudix box motif.

This sequence belongs to the Nudix hydrolase family. RppH subfamily. A divalent metal cation is required as a cofactor.

In terms of biological role, accelerates the degradation of transcripts by removing pyrophosphate from the 5'-end of triphosphorylated RNA, leading to a more labile monophosphorylated state that can stimulate subsequent ribonuclease cleavage. This chain is RNA pyrophosphohydrolase, found in Nitrobacter winogradskyi (strain ATCC 25391 / DSM 10237 / CIP 104748 / NCIMB 11846 / Nb-255).